A 154-amino-acid chain; its full sequence is Large ribosomal subunit protein uL13 (154 aa).

Belongs to the universal ribosomal protein uL13 family. As to quaternary structure, part of the 50S ribosomal subunit.

Functionally, this protein is one of the early assembly proteins of the 50S ribosomal subunit, although it is not seen to bind rRNA by itself. It is important during the early stages of 50S assembly. This is Large ribosomal subunit protein uL13 from Bartonella tribocorum (strain CIP 105476 / IBS 506).